The sequence spans 51 residues: Large ribosomal subunit protein eL39 (51 aa).

The disordered stretch occupies residues 1-22 (MPSQKSFRTKQKLAKAQKQNRP).

This sequence belongs to the eukaryotic ribosomal protein eL39 family. In terms of assembly, interacts with YIH1.

The polypeptide is Large ribosomal subunit protein eL39 (RPL39) (Debaryomyces hansenii (strain ATCC 36239 / CBS 767 / BCRC 21394 / JCM 1990 / NBRC 0083 / IGC 2968) (Yeast)).